A 477-amino-acid chain; its full sequence is RTX-III toxin determinant D (477 aa).

At 1 to 59 (MKLWILGLGEFFQRYRNIWREIWKIRKQLDTPARQKDENEFLPRHLELIETPISKKPRL) the chain is on the cytoplasmic side. The chain crosses the membrane as a helical span at residues 60–77 (IAYLIMLFLFLAIVISII). The Periplasmic segment spans residues 78–477 (SKVEIVASAT…ESITESLRER (400 aa)).

The protein belongs to the membrane fusion protein (MFP) (TC 8.A.1) family.

Its subcellular location is the cell inner membrane. Its function is as follows. Involved in the transport of the toxin RTX-III. In Actinobacillus pleuropneumoniae (Haemophilus pleuropneumoniae), this protein is RTX-III toxin determinant D (apxIIID).